A 205-amino-acid chain; its full sequence is MQQIVLASGNKGKLAEFDQMLAAYGVKVLPQSQFNVSEVAETGTTFVENAIIKARHAAQITGHAAIADDSGLEVDLLQGVPGIYSARYAGENAKDQDNVLKLLDTLKDYPAPRTARFQCVLVYMRHAKDPTPIICQASWEGQIDFVQRGDNGHGYDPIFIPEHHDCSAAQMSSDEKNTLSHRGKALVQLITAMQEKGVFTDRNAQ.

Residue 8–13 (SGNKGK) coordinates substrate. Aspartate 69 (proton acceptor) is an active-site residue. Aspartate 69 is a binding site for Mg(2+). Residues serine 70, 153-156 (HGYD), lysine 176, and 181-182 (HR) contribute to the substrate site.

It belongs to the HAM1 NTPase family. As to quaternary structure, homodimer. Requires Mg(2+) as cofactor.

The catalysed reaction is XTP + H2O = XMP + diphosphate + H(+). It catalyses the reaction dITP + H2O = dIMP + diphosphate + H(+). It carries out the reaction ITP + H2O = IMP + diphosphate + H(+). Its function is as follows. Pyrophosphatase that catalyzes the hydrolysis of nucleoside triphosphates to their monophosphate derivatives, with a high preference for the non-canonical purine nucleotides XTP (xanthosine triphosphate), dITP (deoxyinosine triphosphate) and ITP. Seems to function as a house-cleaning enzyme that removes non-canonical purine nucleotides from the nucleotide pool, thus preventing their incorporation into DNA/RNA and avoiding chromosomal lesions. In Shewanella oneidensis (strain ATCC 700550 / JCM 31522 / CIP 106686 / LMG 19005 / NCIMB 14063 / MR-1), this protein is dITP/XTP pyrophosphatase.